We begin with the raw amino-acid sequence, 749 residues long: Basic juvenile hormone-suppressible protein 2 (749 aa).

An N-terminal signal peptide occupies residues 1 to 14; the sequence is MRAVLLFVVSLAAL.

This sequence belongs to the hemocyanin family. As to expression, fat body, and hemolymph of larvae.

In Trichoplusia ni (Cabbage looper), this protein is Basic juvenile hormone-suppressible protein 2 (BJSP-2).